Reading from the N-terminus, the 176-residue chain is Sperm-egg fusion protein TMEM95 (176 aa).

An N-terminal signal peptide occupies residues 1–16 (MWRLALGGVFLAAAQA). Cystine bridges form between Cys-17–Cys-118, Cys-20–Cys-121, Cys-105–Cys-128, and Cys-109–Cys-134. The Extracellular portion of the chain corresponds to 17–145 (CVFCRLPAHD…PGSQDLWEAK (129 aa)). A helical transmembrane segment spans residues 146–166 (ILLLSIFGAFLLLGVLSLLVE). At 167–176 (SHHLQAKSGL) the chain is on the cytoplasmic side.

Belongs to the TMEM95 family. Does not interact with sperm-egg fusion proteins IZUMO1 or IZUMO1R/JUNO. Post-translationally, N-glycosylated. As to expression, spermatozoa (at protein level).

It is found in the cytoplasmic vesicle. Its subcellular location is the secretory vesicle. The protein resides in the acrosome membrane. Functionally, sperm protein required for fusion of sperm with the egg membrane during fertilization. In Homo sapiens (Human), this protein is Sperm-egg fusion protein TMEM95.